A 334-amino-acid chain; its full sequence is Probable prephenate dehydratase (334 aa).

Residues 7–224 (RVLFLGPKGT…NTTRFLVLKR (218 aa)) enclose the Prephenate dehydratase domain. In terms of domain architecture, ACT spans 244 to 322 (LTFTTRQDDP…SDKSKQWCLW (79 aa)).

It is found in the cytoplasm. The enzyme catalyses prephenate + H(+) = 3-phenylpyruvate + CO2 + H2O. Its pathway is amino-acid biosynthesis; L-phenylalanine biosynthesis; phenylpyruvate from prephenate: step 1/1. Catayzes the decarboxylation/dehydration of prephenate to phenylpyruvate. In Saccharomyces cerevisiae (strain ATCC 204508 / S288c) (Baker's yeast), this protein is Probable prephenate dehydratase (PHA2).